Reading from the N-terminus, the 938-residue chain is Isoleucine--tRNA ligase (938 aa).

A 'HIGH' region motif is present at residues 58–68 (PYANGSIHIGH). Lys183 carries the post-translational modification N6-acetyllysine. Glu561 contributes to the L-isoleucyl-5'-AMP binding site. The 'KMSKS' region motif lies at 602–606 (KMSKS). Lys605 serves as a coordination point for ATP. 4 residues coordinate Zn(2+): Cys901, Cys904, Cys921, and Cys924.

This sequence belongs to the class-I aminoacyl-tRNA synthetase family. IleS type 1 subfamily. As to quaternary structure, monomer. It depends on Zn(2+) as a cofactor.

It localises to the cytoplasm. The catalysed reaction is tRNA(Ile) + L-isoleucine + ATP = L-isoleucyl-tRNA(Ile) + AMP + diphosphate. Its function is as follows. Catalyzes the attachment of isoleucine to tRNA(Ile). As IleRS can inadvertently accommodate and process structurally similar amino acids such as valine, to avoid such errors it has two additional distinct tRNA(Ile)-dependent editing activities. One activity is designated as 'pretransfer' editing and involves the hydrolysis of activated Val-AMP. The other activity is designated 'posttransfer' editing and involves deacylation of mischarged Val-tRNA(Ile). In Escherichia fergusonii (strain ATCC 35469 / DSM 13698 / CCUG 18766 / IAM 14443 / JCM 21226 / LMG 7866 / NBRC 102419 / NCTC 12128 / CDC 0568-73), this protein is Isoleucine--tRNA ligase.